A 750-amino-acid polypeptide reads, in one-letter code: Photosystem I P700 chlorophyll a apoprotein A1 (750 aa).

8 helical membrane passes run 70–93 (VFSA…FHGA), 156–179 (LYCT…FHYH), 195–219 (LNHH…HVSL), 291–309 (IAHH…GHMY), 346–369 (WHAQ…HHMY), 385–411 (LSLF…IFMV), 433–455 (AIIS…LYIH), and 531–549 (FLVH…LILL). [4Fe-4S] cluster-binding residues include Cys-573 and Cys-582. 2 consecutive transmembrane segments (helical) span residues 589–610 (HVFL…HFSW) and 664–686 (LSAY…MFLF). Residue His-675 participates in chlorophyll a' binding. Chlorophyll a contacts are provided by Met-683 and Tyr-691. Trp-692 is a binding site for phylloquinone. The helical transmembrane segment at 724-744 (AVGVTHYLLGGIATTWAFFLA) threads the bilayer.

The protein belongs to the PsaA/PsaB family. As to quaternary structure, the PsaA/B heterodimer binds the P700 chlorophyll special pair and subsequent electron acceptors. PSI consists of a core antenna complex that captures photons, and an electron transfer chain that converts photonic excitation into a charge separation. The eukaryotic PSI reaction center is composed of at least 11 subunits. P700 is a chlorophyll a/chlorophyll a' dimer, A0 is one or more chlorophyll a, A1 is one or both phylloquinones and FX is a shared 4Fe-4S iron-sulfur center. serves as cofactor.

The protein localises to the plastid. The protein resides in the chloroplast thylakoid membrane. It catalyses the reaction reduced [plastocyanin] + hnu + oxidized [2Fe-2S]-[ferredoxin] = oxidized [plastocyanin] + reduced [2Fe-2S]-[ferredoxin]. Functionally, psaA and PsaB bind P700, the primary electron donor of photosystem I (PSI), as well as the electron acceptors A0, A1 and FX. PSI is a plastocyanin-ferredoxin oxidoreductase, converting photonic excitation into a charge separation, which transfers an electron from the donor P700 chlorophyll pair to the spectroscopically characterized acceptors A0, A1, FX, FA and FB in turn. Oxidized P700 is reduced on the lumenal side of the thylakoid membrane by plastocyanin. This is Photosystem I P700 chlorophyll a apoprotein A1 from Solanum bulbocastanum (Wild potato).